The chain runs to 887 residues: Probable LRR receptor-like serine/threonine-protein kinase At5g59680 (887 aa).

The N-terminal stretch at 1–23 (MERSLELLLLLIRTLAIIHISQA) is a signal peptide. Over 25–510 (SQQGFISLDC…TKSGKSFPVT (486 aa)) the chain is Extracellular. Residues Asn143, Asn230, Asn256, Asn289, Asn338, Asn363, Asn400, Asn416, Asn432, Asn445, Asn464, and Asn471 are each glycosylated (N-linked (GlcNAc...) asparagine). LRR repeat units lie at residues 411–434 (RITT…QNLT), 435–457 (TLEK…LSNM), and 459–481 (SLLV…LQRK). Residues 511-531 (IVASVGSAAILIVVLVLVLFL) traverse the membrane as a helical segment. Residues 532–887 (RKKKPSAVEV…FDAEMIPRAR (356 aa)) lie on the Cytoplasmic side of the membrane. Phosphothreonine is present on Thr571. The Protein kinase domain occupies 580–853 (NNFGRVVGEG…HVVIELKECL (274 aa)). ATP-binding positions include 586 to 594 (VGEGGFGVV) and Lys608. Tyr653 bears the Phosphotyrosine mark. Asp705 functions as the Proton acceptor in the catalytic mechanism. Ser739 is subject to Phosphoserine. Residues Thr740 and Thr745 each carry the phosphothreonine modification. Tyr753 is subject to Phosphotyrosine.

The protein belongs to the protein kinase superfamily. Ser/Thr protein kinase family.

The protein localises to the membrane. The enzyme catalyses L-seryl-[protein] + ATP = O-phospho-L-seryl-[protein] + ADP + H(+). The catalysed reaction is L-threonyl-[protein] + ATP = O-phospho-L-threonyl-[protein] + ADP + H(+). The polypeptide is Probable LRR receptor-like serine/threonine-protein kinase At5g59680 (Arabidopsis thaliana (Mouse-ear cress)).